The following is a 469-amino-acid chain: Acetyl-CoA decarbonylase/synthase complex subunit beta 1 (469 aa).

Residues Cys189, Cys192, Cys278, and Cys280 each coordinate [Ni-Fe-S] cluster.

Belongs to the CdhC family. Monomer. The ACDS complex is made up of alpha, epsilon, beta, gamma and delta chains with a probable stoichiometry of (alpha(2)epsilon(2))(4)-beta(8)-(gamma(1)delta(1))(8) (Potential). Requires [Ni-Fe-S] cluster as cofactor.

It catalyses the reaction Co(I)-[corrinoid Fe-S protein] + acetyl-CoA + H(+) = methyl-Co(III)-[corrinoid Fe-S protein] + CO + CoA. It functions in the pathway one-carbon metabolism; methanogenesis from acetate. In terms of biological role, part of a complex that catalyzes the reversible cleavage of acetyl-CoA, allowing growth on acetate as sole source of carbon and energy. The alpha-epsilon complex generates CO from CO(2), while the beta subunit (this protein) combines the CO with CoA and a methyl group to form acetyl-CoA. The methyl group, which is incorporated into acetyl-CoA, is transferred to the beta subunit by a corrinoid iron-sulfur protein (the gamma-delta complex). The chain is Acetyl-CoA decarbonylase/synthase complex subunit beta 1 (cdhC1) from Methanosarcina acetivorans (strain ATCC 35395 / DSM 2834 / JCM 12185 / C2A).